A 178-amino-acid chain; its full sequence is N-alpha-acetyltransferase 80 (178 aa).

Residues 26–178 enclose the N-acetyltransferase domain; that stretch reads VPIHNYPELM…AKKKYMKKVL (153 aa). Substrate is bound by residues Arg48, 53 to 56, Asn88, and Ser98; that span reads RMRS. Acetyl-CoA is bound by residues 99 to 101 and 107 to 112; these read VVV and GQGFGK. Residue Ser134 coordinates substrate. Gln138 contributes to the acetyl-CoA binding site.

The protein belongs to the acetyltransferase family.

The catalysed reaction is N-terminal L-aspartyl-L-aspartyl-L-aspartyl-[protein] + acetyl-CoA = N-terminal N-acetyl-L-aspartyl-L-aspartyl-L-aspartyl-[protein] + CoA + H(+). It carries out the reaction N-terminal L-glutamyl-L-glutamyl-L-glutamyl-[protein] + acetyl-CoA = N-terminal N-acetyl-L-glutamyl-L-glutamyl-L-glutamyl-[protein] + CoA + H(+). Functionally, N-alpha-acetyltransferase that acetylates the amino terminal acidic residue of proteins devoid of initiator methionine. Preferentially acts on proteins starting with Asp-Asp-Asp and Glu-Glu-Glu sequences. In vitro, shows high activity towards N-terminal sequences starting with Met-Asp-Glu-Leu, Met-Glu-Glu-Glu and Met-Asp-Asp-Asp. The chain is N-alpha-acetyltransferase 80 from Drosophila melanogaster (Fruit fly).